The chain runs to 660 residues: Bifunctional polymyxin resistance protein ArnA (660 aa).

A formyltransferase ArnAFT region spans residues 1-304; that stretch reads MKAIVFAYHD…EMGIVTDVRL (304 aa). H104 functions as the Proton donor; for formyltransferase activity in the catalytic mechanism. (6R)-10-formyltetrahydrofolate contacts are provided by residues R114 and 136-140; that span reads VKRPD. The interval 314 to 660 is dehydrogenase ArnADH; sequence RRTRVLILGV…RTTVQEGDGA (347 aa). NAD(+) is bound by residues D347 and 368 to 369; that span reads DI. Residues A393, Y398, and 432–433 each bind UDP-alpha-D-glucuronate; that span reads TS. E434 serves as the catalytic Proton acceptor; for decarboxylase activity. Residues R460, N492, 526 to 535, and Y613 contribute to the UDP-alpha-D-glucuronate site; that span reads KLMDGGAQKR. The active-site Proton donor; for decarboxylase activity is the R619.

This sequence in the N-terminal section; belongs to the Fmt family. UDP-L-Ara4N formyltransferase subfamily. In the C-terminal section; belongs to the NAD(P)-dependent epimerase/dehydratase family. UDP-glucuronic acid decarboxylase subfamily. Homohexamer, formed by a dimer of trimers.

The enzyme catalyses UDP-alpha-D-glucuronate + NAD(+) = UDP-beta-L-threo-pentopyranos-4-ulose + CO2 + NADH. The catalysed reaction is UDP-4-amino-4-deoxy-beta-L-arabinose + (6R)-10-formyltetrahydrofolate = UDP-4-deoxy-4-formamido-beta-L-arabinose + (6S)-5,6,7,8-tetrahydrofolate + H(+). It functions in the pathway nucleotide-sugar biosynthesis; UDP-4-deoxy-4-formamido-beta-L-arabinose biosynthesis; UDP-4-deoxy-4-formamido-beta-L-arabinose from UDP-alpha-D-glucuronate: step 1/3. The protein operates within nucleotide-sugar biosynthesis; UDP-4-deoxy-4-formamido-beta-L-arabinose biosynthesis; UDP-4-deoxy-4-formamido-beta-L-arabinose from UDP-alpha-D-glucuronate: step 3/3. Its pathway is bacterial outer membrane biogenesis; lipopolysaccharide biosynthesis. Functionally, bifunctional enzyme that catalyzes the oxidative decarboxylation of UDP-glucuronic acid (UDP-GlcUA) to UDP-4-keto-arabinose (UDP-Ara4O) and the addition of a formyl group to UDP-4-amino-4-deoxy-L-arabinose (UDP-L-Ara4N) to form UDP-L-4-formamido-arabinose (UDP-L-Ara4FN). The modified arabinose is attached to lipid A and is required for resistance to polymyxin and cationic antimicrobial peptides. This Serratia proteamaculans (strain 568) protein is Bifunctional polymyxin resistance protein ArnA.